We begin with the raw amino-acid sequence, 450 residues long: Glucose-6-phosphate isomerase (450 aa).

At threonine 39 the chain carries Phosphothreonine. Glutamate 291 serves as the catalytic Proton donor. Residues histidine 312 and lysine 426 contribute to the active site.

The protein belongs to the GPI family.

The protein localises to the cytoplasm. The enzyme catalyses alpha-D-glucose 6-phosphate = beta-D-fructose 6-phosphate. The protein operates within carbohydrate biosynthesis; gluconeogenesis. It participates in carbohydrate degradation; glycolysis; D-glyceraldehyde 3-phosphate and glycerone phosphate from D-glucose: step 2/4. Functionally, catalyzes the reversible isomerization of glucose-6-phosphate to fructose-6-phosphate. The polypeptide is Glucose-6-phosphate isomerase (Bacillus mycoides (strain KBAB4) (Bacillus weihenstephanensis)).